Here is a 379-residue protein sequence, read N- to C-terminus: Leukocyte elastase inhibitor A (379 aa).

Phosphoserine is present on S300.

The protein belongs to the serpin family. Ov-serpin subfamily. Monomer.

It localises to the secreted. The protein resides in the cytoplasm. Its subcellular location is the cytolytic granule. It is found in the early endosome. Functionally, regulates the activity of the neutrophil proteases. The chain is Leukocyte elastase inhibitor A (Serpinb1a) from Rattus norvegicus (Rat).